Here is a 141-residue protein sequence, read N- to C-terminus: 4-hydroxybenzoyl-CoA thioesterase (141 aa).

Asp-17 is an active-site residue. Substrate is bound by residues Trp-47, 59–61, and Lys-90; that span reads TPI.

This sequence belongs to the 4-hydroxybenzoyl-CoA thioesterase family. In terms of assembly, homotetramer.

The enzyme catalyses 4-hydroxybenzoyl-CoA + H2O = 4-hydroxybenzoate + CoA + H(+). It participates in xenobiotic degradation; 4-chlorobenzoate degradation; 4-hydroxybenzoate from 4-chlorobenzoate: step 3/3. Unaffected by EDTA, Mg(2+), Mn(2+), Fe(2+), Ca(2+), Co(2+) and Zn(2+). Hydrolyzes 4-hydroxybenzoate-CoA, and to a lesser extent benzoyl-CoA and 4-chlorobenzoate-CoA. Not active against aliphatic acyl-CoA thioesters, including palmitoyl-CoA, hexanoyl-CoA and acetyl-CoA. The chain is 4-hydroxybenzoyl-CoA thioesterase from Pseudomonas sp. (strain CBS-3).